We begin with the raw amino-acid sequence, 286 residues long: 2,3,4,5-tetrahydropyridine-2,6-dicarboxylate N-succinyltransferase (286 aa).

Positions 109 and 146 each coordinate substrate.

It belongs to the transferase hexapeptide repeat family. In terms of assembly, homotrimer.

The protein localises to the cytoplasm. It catalyses the reaction (S)-2,3,4,5-tetrahydrodipicolinate + succinyl-CoA + H2O = (S)-2-succinylamino-6-oxoheptanedioate + CoA. It functions in the pathway amino-acid biosynthesis; L-lysine biosynthesis via DAP pathway; LL-2,6-diaminopimelate from (S)-tetrahydrodipicolinate (succinylase route): step 1/3. This chain is 2,3,4,5-tetrahydropyridine-2,6-dicarboxylate N-succinyltransferase, found in Bartonella tribocorum (strain CIP 105476 / IBS 506).